The chain runs to 218 residues: Small ribosomal subunit protein uS3 (218 aa).

Positions 39–107 (IRDYIKSKLL…QISINIVEIK (69 aa)) constitute a KH type-2 domain.

This sequence belongs to the universal ribosomal protein uS3 family. As to quaternary structure, part of the 30S ribosomal subunit. Forms a tight complex with proteins S10 and S14.

In terms of biological role, binds the lower part of the 30S subunit head. Binds mRNA in the 70S ribosome, positioning it for translation. The polypeptide is Small ribosomal subunit protein uS3 (Desulforudis audaxviator (strain MP104C)).